Consider the following 38-residue polypeptide: Large ribosomal subunit protein bL36 (38 aa).

Belongs to the bacterial ribosomal protein bL36 family.

The sequence is that of Large ribosomal subunit protein bL36 from Stutzerimonas stutzeri (strain A1501) (Pseudomonas stutzeri).